The sequence spans 646 residues: WW domain-containing adapter protein with coiled-coil (646 aa).

The segment at 1-138 (MVMYARKQQR…YDSADDWSEH (138 aa)) is disordered. A compositionally biased stretch (polar residues) spans 23–37 (QPFQALKYSSKSHPS). The segment covering 38–50 (SGDHRHEKMRDAA) has biased composition (basic and acidic residues). S53 carries the phosphoserine modification. Residues 61-75 (RSNSPENKYSDSTGH) are compositionally biased toward polar residues. Residues 103–122 (NHSALHSSNSHSSNPSNNPS) show a composition bias toward low complexity. The WW domain occupies 129-162 (YDSADDWSEHISSSGKKYYYNCRTEVSQWEKPKE). Phosphoserine occurs at positions 131 and 142. Composition is skewed to basic and acidic residues over residues 158–174 (EKPKEWLEREQRQKEAN) and 182–191 (PKDRDYRREV). Disordered stretches follow at residues 158–352 (EKPK…PQST) and 428–541 (TQAQ…TATV). Over residues 211 to 225 (DASSLLPQNILSQTS) the composition is skewed to polar residues. Position 225 is a phosphoserine (S225). Basic and acidic residues predominate over residues 226-239 (RHNDKDYRLPRAET). Low complexity predominate over residues 252–267 (PVVHPTATPSTVPSSP). Residues 284–300 (GASTLSKLPTPTASLPA) show a composition bias toward polar residues. Phosphothreonine is present on T293. At K302 the chain carries N6-acetyllysine. A compositionally biased stretch (polar residues) spans 316–331 (SHSCTTPSTSSASGLN). Over residues 332–351 (PTSAPPTSASAVPVSPVPQS) the composition is skewed to low complexity. The span at 428-463 (TQAQPSNQSPMSLTSDASSPRSYVSPRISTPQTNTV) shows a compositional bias: polar residues. Position 446 is a phosphoserine (S446). T471 bears the Phosphothreonine mark. The span at 490 to 503 (VSHSATQQPVTADK) shows a compositional bias: polar residues. S511, S523, and S525 each carry phosphoserine. Residues 511–524 (SPRSLQRLSSQRSP) show a composition bias toward low complexity. Residues 528–541 (PNHTCSSNASTATV) show a composition bias toward polar residues. The stretch at 617-643 (QATLREQRILFLRQQIKELEKLKNQNS) forms a coiled coil.

In terms of assembly, interacts (via coiled coil domain) with RNF20, RNF40 and UBE2A. Interacts (via WW domain) with RNA polymerase II. Interacts with MTOR and other components of the MTOR pathway including RPTOR, RUVBL1, RUVBL2, TTI1 and TTI2. Phosphorylated on tyrosine residues.

The protein localises to the nucleus speckle. The protein resides in the nucleus. In terms of biological role, acts as a linker between gene transcription and histone H2B monoubiquitination at 'Lys-120' (H2BK120ub1). Interacts with the RNA polymerase II transcriptional machinery via its WW domain and with RNF20-RNF40 via its coiled coil region, thereby linking and regulating H2BK120ub1 and gene transcription. Regulates the cell-cycle checkpoint activation in response to DNA damage. Positive regulator of amino acid starvation-induced autophagy. Also acts as a negative regulator of basal autophagy. Positively regulates MTOR activity by promoting, in an energy-dependent manner, the assembly of the TTT complex composed of TELO2, TTI1 and TTI2 and the RUVBL complex composed of RUVBL1 and RUVBL2 into the TTT-RUVBL complex. This leads to the dimerization of the mTORC1 complex and its subsequent activation. May negatively regulate the ubiquitin proteasome pathway. This Mus musculus (Mouse) protein is WW domain-containing adapter protein with coiled-coil (Wac).